The following is a 495-amino-acid chain: Lysine--tRNA ligase (495 aa).

Residues Glu-406 and Glu-413 each coordinate Mg(2+).

It belongs to the class-II aminoacyl-tRNA synthetase family. In terms of assembly, homodimer. The cofactor is Mg(2+).

The protein localises to the cytoplasm. The enzyme catalyses tRNA(Lys) + L-lysine + ATP = L-lysyl-tRNA(Lys) + AMP + diphosphate. The protein is Lysine--tRNA ligase of Leptospira borgpetersenii serovar Hardjo-bovis (strain JB197).